The following is a 132-amino-acid chain: Large-conductance mechanosensitive channel (132 aa).

2 helical membrane-spanning segments follow: residues 10–30 (FAVKGNVIDMAVGVVIGSAFG) and 76–96 (GNFIQVTIDFLIIAFCIFLAI).

The protein belongs to the MscL family. As to quaternary structure, homopentamer.

The protein localises to the cell inner membrane. Channel that opens in response to stretch forces in the membrane lipid bilayer. May participate in the regulation of osmotic pressure changes within the cell. The sequence is that of Large-conductance mechanosensitive channel from Campylobacter hominis (strain ATCC BAA-381 / DSM 21671 / CCUG 45161 / LMG 19568 / NCTC 13146 / CH001A).